The primary structure comprises 573 residues: Ascochitine biosynthesis cluster transcriptional regulator (573 aa).

It localises to the nucleus. Its function is as follows. Transcription factor that regulates the expression of the gene cluster that mediates the biosynthesis of the mycotoxin ascochitine, an o-quinone methide that plays a possible protective role against other microbial competitors in nature and is considered to be important for pathogenicity of legume-associated Didymella species. The sequence is that of Ascochitine biosynthesis cluster transcriptional regulator from Didymella fabae (Leaf and pod spot disease fungus).